A 544-amino-acid polypeptide reads, in one-letter code: Cytochrome P450 monooxygenase notG' (544 aa).

The N-terminal stretch at 1-22 is a signal peptide; it reads MELPFSAMSLLYLLVGIAGVIS. 2 helical membrane-spanning segments follow: residues 42-62 and 66-86; these read WYTL…GLPL and AKAT…SLLL. Asn-226 and Asn-404 each carry an N-linked (GlcNAc...) asparagine glycan. Cys-487 contributes to the heme binding site.

The protein belongs to the cytochrome P450 family. Heme is required as a cofactor.

Its subcellular location is the membrane. The protein operates within alkaloid biosynthesis. Functionally, cytochrome P450 monooxygenase; part of the gene cluster that mediates the biosynthesis of notoamide, a fungal indole alkaloid that belongs to a family of natural products containing a characteristic bicyclo[2.2.2]diazaoctane core. The first step of notoamide biosynthesis involves coupling of L-proline and L-tryptophan by the bimodular NRPS notE', to produce cyclo-L-tryptophan-L-proline called brevianamide F. The reverse prenyltransferase notF' then acts as a deoxybrevianamide E synthase and converts brevianamide F to deoxybrevianamide E via reverse prenylation at C-2 of the indole ring leading to the bicyclo[2.2.2]diazaoctane core. Deoxybrevianamide E is further hydroxylated at C-6 of the indole ring, likely catalyzed by the cytochrome P450 monooxygenase notG', to yield 6-hydroxy-deoxybrevianamide E. 6-hydroxy-deoxybrevianamide E is a specific substrate of the prenyltransferase notC' for normal prenylation at C-7 to produce 6-hydroxy-7-prenyl-deoxybrevianamide, also called notoamide S. As the proposed pivotal branching point in notoamide biosynthesis, notoamide S can be diverted to notoamide E through an oxidative pyran ring closure putatively catalyzed by either notH' cytochrome P450 monooxygenase or the notD' FAD-linked oxidoreductase. This step would be followed by an indole 2,3-epoxidation-initiated pinacol-like rearrangement catalyzed by the notB' FAD-dependent monooxygenase leading to the formation of notoamide C and notoamide D. On the other hand notoamide S is converted to notoamide T by notH' (or notD'), a bifunctional oxidase that also functions as the intramolecular Diels-Alderase responsible for generation of (-)-notoamide T. To generate antipodal (+)-notoaminide T, notH (or notD) in Aspergillus strain MF297-2 is expected to catalyze a Diels-Alder reaction leading to the opposite stereochemistry. The remaining oxidoreductase notD' (or notH') likely catalyzes the oxidative pyran ring formation to yield (-)-stephacidin A. The FAD-dependent monooxygenase notI' is highly similar to notB' and is predicted to catalyze a similar conversion from (-)-stephacidin A to (+)-notoamide B via the 2,3-epoxidation of (-)-stephacidin A followed by a pinacol-type rearrangement. Finally, it remains unclear which enzyme could be responsible for the final hydroxylation steps leading to notoamide A and sclerotiamide. This chain is Cytochrome P450 monooxygenase notG', found in Aspergillus versicolor.